Reading from the N-terminus, the 211-residue chain is 2,3-bisphosphoglycerate-dependent phosphoglycerate mutase (211 aa).

Substrate-binding positions include 9 to 16 (RHGQSDWN), 22 to 23 (TG), R61, 88 to 91 (ERDY), K99, 115 to 116 (RR), and 159 to 160 (GN). H10 serves as the catalytic Tele-phosphohistidine intermediate. E88 (proton donor/acceptor) is an active-site residue.

It belongs to the phosphoglycerate mutase family. BPG-dependent PGAM subfamily. As to quaternary structure, homodimer.

It carries out the reaction (2R)-2-phosphoglycerate = (2R)-3-phosphoglycerate. Its pathway is carbohydrate degradation; glycolysis; pyruvate from D-glyceraldehyde 3-phosphate: step 3/5. Catalyzes the interconversion of 2-phosphoglycerate and 3-phosphoglycerate. The chain is 2,3-bisphosphoglycerate-dependent phosphoglycerate mutase from Rhizobium meliloti (strain 1021) (Ensifer meliloti).